Consider the following 100-residue polypeptide: Urease subunit gamma (100 aa).

The protein belongs to the urease gamma subunit family. As to quaternary structure, heterotrimer of UreA (gamma), UreB (beta) and UreC (alpha) subunits. Three heterotrimers associate to form the active enzyme.

The protein localises to the cytoplasm. The enzyme catalyses urea + 2 H2O + H(+) = hydrogencarbonate + 2 NH4(+). It participates in nitrogen metabolism; urea degradation; CO(2) and NH(3) from urea (urease route): step 1/1. The protein is Urease subunit gamma of Rhizobium meliloti (strain 1021) (Ensifer meliloti).